A 651-amino-acid chain; its full sequence is UvrABC system protein C (651 aa).

The region spanning 21–100 is the GIY-YIG domain; sequence TEPGCYLMRD…IKNQQPHFNV (80 aa). In terms of domain architecture, UVR spans 210-245; it reads DELRQLLNQQMERYAERLDFESAARIRDQLQGIDQL.

It belongs to the UvrC family. In terms of assembly, interacts with UvrB in an incision complex.

The protein resides in the cytoplasm. In terms of biological role, the UvrABC repair system catalyzes the recognition and processing of DNA lesions. UvrC both incises the 5' and 3' sides of the lesion. The N-terminal half is responsible for the 3' incision and the C-terminal half is responsible for the 5' incision. The chain is UvrABC system protein C from Synechococcus sp. (strain CC9311).